The primary structure comprises 290 residues: Phosphatidylglycerol--prolipoprotein diacylglyceryl transferase (290 aa).

The next 7 membrane-spanning stretches (helical) occupy residues 21–41, 60–80, 96–116, 124–144, 198–218, 225–245, and 260–280; these read VALHWYGLMYLVGFIFAMWLA, LLYAGFLGVFLGGRIGYVLFY, WDGGMSFHGGLIGVILVMVIF, FFQVADFMAPLIPFGLGAGRL, SQLYELALEGVVLFIILNLFI, GSVSGLFLIGYGAFRIIVEFF, and ISMGQILSIPMIVAGIIMMIW. Arginine 143 is a binding site for a 1,2-diacyl-sn-glycero-3-phospho-(1'-sn-glycerol).

The protein belongs to the Lgt family.

It is found in the cell inner membrane. The catalysed reaction is L-cysteinyl-[prolipoprotein] + a 1,2-diacyl-sn-glycero-3-phospho-(1'-sn-glycerol) = an S-1,2-diacyl-sn-glyceryl-L-cysteinyl-[prolipoprotein] + sn-glycerol 1-phosphate + H(+). The protein operates within protein modification; lipoprotein biosynthesis (diacylglyceryl transfer). In terms of biological role, catalyzes the transfer of the diacylglyceryl group from phosphatidylglycerol to the sulfhydryl group of the N-terminal cysteine of a prolipoprotein, the first step in the formation of mature lipoproteins. In Enterobacter sp. (strain 638), this protein is Phosphatidylglycerol--prolipoprotein diacylglyceryl transferase.